The primary structure comprises 224 residues: Cytochrome c oxidase subunit 2 (224 aa).

At 1–26 (MSTWGQINLMDPASPIQMEMMLFHDH) the chain is on the mitochondrial intermembrane side. The helical transmembrane segment at 27-48 (AMAILIGIFTLVSLLGVKLCFN) threads the bilayer. At 49-62 (TLSTRTMHEAQLLE) the chain is on the mitochondrial matrix side. The chain crosses the membrane as a helical span at residues 63–82 (TLWTILPAFLLVWLALPSLR). The Mitochondrial intermembrane portion of the chain corresponds to 83–224 (LLYLLDEQGS…DVKDFIKMCN (142 aa)). The Cu cation site is built by His161, Cys196, Glu198, Cys200, His204, and Met207. Glu198 is a binding site for Mg(2+).

This sequence belongs to the cytochrome c oxidase subunit 2 family. In terms of assembly, component of the cytochrome c oxidase (complex IV, CIV), a multisubunit enzyme composed of a catalytic core of 3 subunits and several supernumerary subunits. The complex exists as a monomer or a dimer and forms supercomplexes (SCs) in the inner mitochondrial membrane with ubiquinol-cytochrome c oxidoreductase (cytochrome b-c1 complex, complex III, CIII). The cofactor is Cu cation.

Its subcellular location is the mitochondrion inner membrane. It catalyses the reaction 4 Fe(II)-[cytochrome c] + O2 + 8 H(+)(in) = 4 Fe(III)-[cytochrome c] + 2 H2O + 4 H(+)(out). Component of the cytochrome c oxidase, the last enzyme in the mitochondrial electron transport chain which drives oxidative phosphorylation. The respiratory chain contains 3 multisubunit complexes succinate dehydrogenase (complex II, CII), ubiquinol-cytochrome c oxidoreductase (cytochrome b-c1 complex, complex III, CIII) and cytochrome c oxidase (complex IV, CIV), that cooperate to transfer electrons derived from NADH and succinate to molecular oxygen, creating an electrochemical gradient over the inner membrane that drives transmembrane transport and the ATP synthase. Cytochrome c oxidase is the component of the respiratory chain that catalyzes the reduction of oxygen to water. Electrons originating from reduced cytochrome c in the intermembrane space (IMS) are transferred via the dinuclear copper A center (CU(A)) of subunit 2 and heme A of subunit 1 to the active site in subunit 1, a binuclear center (BNC) formed by heme A3 and copper B (CU(B)). The BNC reduces molecular oxygen to 2 water molecules using 4 electrons from cytochrome c in the IMS and 4 protons from the mitochondrial matrix. The protein is Cytochrome c oxidase subunit 2 (COII) of Albinaria caerulea (Land snail).